The following is a 185-amino-acid chain: NEDD8-conjugating enzyme UBE2F (185 aa).

A disordered region spans residues 1 to 29 (MLTLASKLKRDDGVKGSRTSSTTSDSTRR). Positions 1–29 (MLTLASKLKRDDGVKGSRTSSTTSDSTRR) are interaction with uba3. A UBC core domain is found at 32-185 (VRDRLLVKEV…VEDYIKRYAR (154 aa)). Cysteine 116 acts as the Glycyl thioester intermediate in catalysis.

The protein belongs to the ubiquitin-conjugating enzyme family. UBE2F subfamily.

The catalysed reaction is [E1 NEDD8-activating enzyme]-S-[NEDD8 protein]-yl-L-cysteine + [E2 NEDD8-conjugating enzyme]-L-cysteine = [E1 NEDD8-activating enzyme]-L-cysteine + [E2 NEDD8-conjugating enzyme]-S-[NEDD8-protein]-yl-L-cysteine.. It participates in protein modification; protein neddylation. Functionally, accepts the ubiquitin-like protein NEDD8 from the UBA3-NAE1 E1 complex and catalyzes its covalent attachment to other proteins. Together with the E3 ubiquitin ligase rnf7/rbx2, specifically neddylates cullin-5 (cul5). Does not neddylate cul1, cul2, cul3, cul4a or cul4b. In Xenopus tropicalis (Western clawed frog), this protein is NEDD8-conjugating enzyme UBE2F (ube2f).